A 365-amino-acid chain; its full sequence is Donuts protein 1 (365 aa).

The tract at residues 28 to 49 (NSGLELPSQDYTNVEEKESSPK) is disordered. Residues 82-125 (EKLCVLKELKIAFPEVDDTLIKAILIASQGVLEPAFNSLLYYSS) form the CUE domain. 2 disordered regions span residues 215–246 (HNTI…KGVN) and 286–335 (ESEE…YKSA). A compositionally biased stretch (basic and acidic residues) spans 224 to 244 (SILKGKEKGKEEEKEKGEEKG). Positions 286–295 (ESEEEEEQDV) are enriched in acidic residues. Over residues 315-331 (EAQRDSADRLPAKDDGG) the composition is skewed to basic and acidic residues.

As to quaternary structure, may interact directly with ADY3. Probable component of a spindle pole body (SPB) complex composed of ADY3, SSP1, DON1, MPC54, SPO21/MPC70, NUD1 and CNM67.

The protein resides in the prospore membrane. Functionally, involved in the pathway that organizes the prospore membrane (PSM) during sporulation. This is Donuts protein 1 (DON1) from Saccharomyces cerevisiae (strain ATCC 204508 / S288c) (Baker's yeast).